The sequence spans 386 residues: GTPase Obg (386 aa).

The Obg domain maps to 1–159 (MKFVDEAVIR…RSLKLELMLL (159 aa)). The 174-residue stretch at 160–333 (ADVGLLGMPN…LSLKLVDFID (174 aa)) folds into the OBG-type G domain. GTP contacts are provided by residues 166–173 (GMPNAGKS), 191–195 (FTTLV), 213–216 (DIPG), 283–286 (NKKD), and 314–316 (SAY). Positions 173 and 193 each coordinate Mg(2+). A disordered region spans residues 356 to 375 (KDSDSLNEDFDDSDDDDFDD). Residues 360 to 375 (SLNEDFDDSDDDDFDD) show a composition bias toward acidic residues.

The protein belongs to the TRAFAC class OBG-HflX-like GTPase superfamily. OBG GTPase family. Monomer. Mg(2+) is required as a cofactor.

It is found in the cytoplasm. Its function is as follows. An essential GTPase which binds GTP, GDP and possibly (p)ppGpp with moderate affinity, with high nucleotide exchange rates and a fairly low GTP hydrolysis rate. Plays a role in control of the cell cycle, stress response, ribosome biogenesis and in those bacteria that undergo differentiation, in morphogenesis control. This is GTPase Obg from Shewanella sediminis (strain HAW-EB3).